The primary structure comprises 151 residues: Lipoprotein signal peptidase (151 aa).

3 helical membrane passes run 33-53 (VIPD…FGLL), 58-78 (WIFI…QFKI), and 87-107 (LTLG…LFIG). Catalysis depends on residues aspartate 111 and aspartate 126. A helical membrane pass occupies residues 120–140 (FVFNFADSAIVVGVGLLMILM).

The protein belongs to the peptidase A8 family.

The protein localises to the cell membrane. The enzyme catalyses Release of signal peptides from bacterial membrane prolipoproteins. Hydrolyzes -Xaa-Yaa-Zaa-|-(S,diacylglyceryl)Cys-, in which Xaa is hydrophobic (preferably Leu), and Yaa (Ala or Ser) and Zaa (Gly or Ala) have small, neutral side chains.. It participates in protein modification; lipoprotein biosynthesis (signal peptide cleavage). In terms of biological role, this protein specifically catalyzes the removal of signal peptides from prolipoproteins. The chain is Lipoprotein signal peptidase from Desulfitobacterium hafniense (strain DSM 10664 / DCB-2).